A 167-amino-acid chain; its full sequence is MIFLGLDPGLGTTGWGAITVEGNRLSHIANGQIRTDPSMALARRLALLHDALAAVIASHQPEMAAVEEVLGNSNAQSTLKLGQARGIALFSLAEAGLSVGEYHPNVVKKAVVGTGSADKKQVQAMVSRLLPGVKLAGPDAADALAVAITHAHHHASARGYARRVRAS.

Catalysis depends on residues Asp-7, Glu-67, and Asp-139. Residues Asp-7, Glu-67, and Asp-139 each coordinate Mg(2+).

It belongs to the RuvC family. Homodimer which binds Holliday junction (HJ) DNA. The HJ becomes 2-fold symmetrical on binding to RuvC with unstacked arms; it has a different conformation from HJ DNA in complex with RuvA. In the full resolvosome a probable DNA-RuvA(4)-RuvB(12)-RuvC(2) complex forms which resolves the HJ. The cofactor is Mg(2+).

The protein resides in the cytoplasm. The enzyme catalyses Endonucleolytic cleavage at a junction such as a reciprocal single-stranded crossover between two homologous DNA duplexes (Holliday junction).. In terms of biological role, the RuvA-RuvB-RuvC complex processes Holliday junction (HJ) DNA during genetic recombination and DNA repair. Endonuclease that resolves HJ intermediates. Cleaves cruciform DNA by making single-stranded nicks across the HJ at symmetrical positions within the homologous arms, yielding a 5'-phosphate and a 3'-hydroxyl group; requires a central core of homology in the junction. The consensus cleavage sequence is 5'-(A/T)TT(C/G)-3'. Cleavage occurs on the 3'-side of the TT dinucleotide at the point of strand exchange. HJ branch migration catalyzed by RuvA-RuvB allows RuvC to scan DNA until it finds its consensus sequence, where it cleaves and resolves the cruciform DNA. This Zymomonas mobilis subsp. mobilis (strain ATCC 31821 / ZM4 / CP4) protein is Crossover junction endodeoxyribonuclease RuvC.